The chain runs to 355 residues: MSTFAIPRSVEWRETHVTILNQQKLPSIIEYIDLHTLEDVYEAIATLKVRGAPAIGITAAYGLALAALRYDTESLDEFRRRLKRDRDYLASARPTAVNLFWALDRLVTAAADALSVNEAKTTLVHEAIRIQVEDEDVCRRIGEHALSLFRPGERVMTICNAGSIATARYGTALAPFYLAKEKGIELSVYALETRPVLQGARLTAWELMQAGVDVTLITDNMAAQAIKAKGIGAIIVGADRIAQNGDTANKIGTFGLALLAKSFDIPFYVAAPLSTIDLTTKTGADIPIEERHPDEVTHIAGVRIAPEGVNVYNPAFDVTPNELITAIITEKGIIRGNYNATLPSLFTKEEQHETI.

Substrate contacts are provided by residues 50-52 (RGA), arginine 93, and glutamine 198. Aspartate 239 acts as the Proton donor in catalysis. Residue 249 to 250 (NK) participates in substrate binding.

The protein belongs to the eIF-2B alpha/beta/delta subunits family. MtnA subfamily. Homodimer.

It carries out the reaction 5-(methylsulfanyl)-alpha-D-ribose 1-phosphate = 5-(methylsulfanyl)-D-ribulose 1-phosphate. It functions in the pathway amino-acid biosynthesis; L-methionine biosynthesis via salvage pathway; L-methionine from S-methyl-5-thio-alpha-D-ribose 1-phosphate: step 1/6. Its function is as follows. Catalyzes the interconversion of methylthioribose-1-phosphate (MTR-1-P) into methylthioribulose-1-phosphate (MTRu-1-P). The chain is Methylthioribose-1-phosphate isomerase from Geobacillus kaustophilus (strain HTA426).